A 669-amino-acid polypeptide reads, in one-letter code: DNA ligase (669 aa).

NAD(+)-binding positions include 32–36 (DAEYD), 81–82 (SL), and Glu111. The active-site N6-AMP-lysine intermediate is the Lys113. NAD(+)-binding residues include Arg134, Glu171, Lys290, and Lys314. Residues Cys408, Cys411, Cys426, and Cys432 each coordinate Zn(2+). The region spanning 591–669 (EEALSLKGQT…EAELLAILGS (79 aa)) is the BRCT domain.

The protein belongs to the NAD-dependent DNA ligase family. LigA subfamily. Mg(2+) serves as cofactor. It depends on Mn(2+) as a cofactor.

The enzyme catalyses NAD(+) + (deoxyribonucleotide)n-3'-hydroxyl + 5'-phospho-(deoxyribonucleotide)m = (deoxyribonucleotide)n+m + AMP + beta-nicotinamide D-nucleotide.. Its function is as follows. DNA ligase that catalyzes the formation of phosphodiester linkages between 5'-phosphoryl and 3'-hydroxyl groups in double-stranded DNA using NAD as a coenzyme and as the energy source for the reaction. It is essential for DNA replication and repair of damaged DNA. This Shewanella loihica (strain ATCC BAA-1088 / PV-4) protein is DNA ligase.